Here is a 379-residue protein sequence, read N- to C-terminus: Anhydro-N-acetylmuramic acid kinase (379 aa).

An ATP-binding site is contributed by 9–16; sequence GTSADGVD.

The protein belongs to the anhydro-N-acetylmuramic acid kinase family.

It carries out the reaction 1,6-anhydro-N-acetyl-beta-muramate + ATP + H2O = N-acetyl-D-muramate 6-phosphate + ADP + H(+). Its pathway is amino-sugar metabolism; 1,6-anhydro-N-acetylmuramate degradation. The protein operates within cell wall biogenesis; peptidoglycan recycling. Its function is as follows. Catalyzes the specific phosphorylation of 1,6-anhydro-N-acetylmuramic acid (anhMurNAc) with the simultaneous cleavage of the 1,6-anhydro ring, generating MurNAc-6-P. Is required for the utilization of anhMurNAc either imported from the medium or derived from its own cell wall murein, and thus plays a role in cell wall recycling. This chain is Anhydro-N-acetylmuramic acid kinase, found in Prochlorococcus marinus (strain MIT 9313).